The sequence spans 382 residues: uncharacterized protein (382 aa).

The next 12 helical transmembrane spans lie at Val8–Leu28, Met45–Ile65, Tyr75–Trp95, Phe102–Ser122, Leu131–Ser151, Leu157–Phe177, Leu204–Pro224, Gly231–Gly251, Val270–Pro290, Ala291–Cys311, Ala325–Met345, and Ser349–Leu369.

This sequence belongs to the major facilitator superfamily. YcaD (TC 2.A.1.26) family.

The protein localises to the cell inner membrane. This is an uncharacterized protein from Salmonella paratyphi B (strain ATCC BAA-1250 / SPB7).